Consider the following 1259-residue polypeptide: Zinc finger protein BRUTUS-like At1g74770 (1259 aa).

A helical transmembrane segment spans residues 441–461; it reads LLYTSIHVLPLGLLKCVILWF. Basic and acidic residues-rich tracts occupy residues 904-916 and 924-934; these read KEEKDLERSESKK and EGDKEQTDKMS. The interval 904 to 938 is disordered; sequence KEEKDLERSESKKICRGSNQEGDKEQTDKMSQKVS. A CHY-type zinc finger spans residues 1018-1087; that stretch reads PHSLIFGCNH…ANCSNTSCKS (70 aa). Residues cysteine 1025, histidine 1027, cysteine 1038, cysteine 1039, cysteine 1045, cysteine 1048, histidine 1049, histidine 1055, cysteine 1067, cysteine 1070, cysteine 1080, cysteine 1085, cysteine 1094, cysteine 1097, histidine 1108, cysteine 1109, cysteine 1112, cysteine 1115, histidine 1127, cysteine 1128, cysteine 1131, cysteine 1134, histidine 1142, and cysteine 1144 each coordinate Zn(2+). The segment at 1089–1152 adopts a CTCHY-type zinc-finger fold; sequence MGKYFCKICK…VCREKCLEDN (64 aa). An RING-type; atypical zinc finger spans residues 1153–1195; it reads CPICHEYIFTSSSPVKALPCGHLMHSTCFQEYTCSHYTCPVCS.

In terms of assembly, binds zinc and iron ions.

The protein localises to the membrane. The protein resides in the nucleus. The protein operates within protein modification; protein ubiquitination. Its function is as follows. Probable E3 ubiquitin-protein ligase that may regulate the response to iron deficiency and thus contributes to iron homeostasis. The sequence is that of Zinc finger protein BRUTUS-like At1g74770 from Arabidopsis thaliana (Mouse-ear cress).